Reading from the N-terminus, the 220-residue chain is Ribosomal RNA large subunit methyltransferase E (220 aa).

The segment covering 1 to 10 (MSRSGKDPGK) has biased composition (basic and acidic residues). The interval 1–24 (MSRSGKDPGKRVKTARKRSASSTR) is disordered. Residues Gly75, Trp77, Asp94, Asp110, and Asp134 each coordinate S-adenosyl-L-methionine. The Proton acceptor role is filled by Lys174.

It belongs to the class I-like SAM-binding methyltransferase superfamily. RNA methyltransferase RlmE family.

The protein resides in the cytoplasm. The enzyme catalyses uridine(2552) in 23S rRNA + S-adenosyl-L-methionine = 2'-O-methyluridine(2552) in 23S rRNA + S-adenosyl-L-homocysteine + H(+). Specifically methylates the uridine in position 2552 of 23S rRNA at the 2'-O position of the ribose in the fully assembled 50S ribosomal subunit. The sequence is that of Ribosomal RNA large subunit methyltransferase E from Erythrobacter litoralis (strain HTCC2594).